The sequence spans 585 residues: Putative sulfur deprivation response regulator (585 aa).

The next 5 helical transmembrane spans lie at Val-5 to Ile-25, Ala-30 to Ala-50, Val-83 to Val-103, Phe-117 to Ser-137, and Ile-162 to Leu-182. 2 RCK C-terminal domains span residues Met-189–Leu-274 and Glu-288–Trp-372. 5 helical membrane passes run Leu-389–Val-409, Pro-411–Val-431, Ile-442–Ala-462, Val-482–Val-502, and Phe-561–Phe-581.

This sequence belongs to the CitM (TC 2.A.11) transporter family.

The protein localises to the membrane. Not known; mutations in SAC1 produces cells that cannot synthesize arylsulfatase and cannot take up sulfate as rapidly as wild-type cells. SAC1 is necessary for cells to survive sulfur deprivation. The polypeptide is Putative sulfur deprivation response regulator (SAC1) (Chlamydomonas reinhardtii (Chlamydomonas smithii)).